The primary structure comprises 185 residues: MRYWSIRDEDVIDLVKRRYNVTISADQIAKARGFEFRISWKKAIETARAIRFLTIKQAEDYMEKVKDLKAPIPIKEFTRKQAHHNVPWDGWPVAKWPVKVADSFLQVLRNLESNASYRGLNIDNTVIVHASASRGMRIRNYMPRALGRATPWFQDTVNIELVAVELPAELVPKKFSWARVLKAIK.

Belongs to the universal ribosomal protein uL22 family. Part of the 50S ribosomal subunit.

This protein binds specifically to 23S rRNA. It makes multiple contacts with different domains of the 23S rRNA in the assembled 50S subunit and ribosome. In terms of biological role, the globular domain of the protein is located near the polypeptide exit tunnel on the outside of the subunit, while an extended beta-hairpin is found that lines the wall of the exit tunnel in the center of the 70S ribosome. The chain is Large ribosomal subunit protein uL22 from Caldivirga maquilingensis (strain ATCC 700844 / DSM 13496 / JCM 10307 / IC-167).